Consider the following 455-residue polypeptide: Alpha-1,3/1,6-mannosyltransferase ALG2 (455 aa).

A helical membrane pass occupies residues 73–95; that stretch reads FGRFYILCAILRQFVLVASLILW. N-linked (GlcNAc...) asparagine glycosylation occurs at Asn138. Residues 434–453 form a helical membrane-spanning segment; it reads GAVYLLGAIGVLFACIIYCI.

The protein belongs to the glycosyltransferase group 1 family. Glycosyltransferase 4 subfamily.

The protein resides in the endoplasmic reticulum membrane. It catalyses the reaction a beta-D-Man-(1-&gt;4)-beta-D-GlcNAc-(1-&gt;4)-alpha-D-GlcNAc-diphospho-di-trans,poly-cis-dolichol + GDP-alpha-D-mannose = an alpha-D-Man-(1-&gt;3)-beta-D-Man-(1-&gt;4)-beta-D-GlcNAc-(1-&gt;4)-alpha-D-GlcNAc-diphospho-di-trans,poly-cis-dolichol + GDP + H(+). The catalysed reaction is an alpha-D-Man-(1-&gt;3)-beta-D-Man-(1-&gt;4)-beta-D-GlcNAc-(1-&gt;4)-alpha-D-GlcNAc-diphospho-di-trans,poly-cis-dolichol + GDP-alpha-D-mannose = an alpha-D-Man-(1-&gt;3)-[alpha-D-Man-(1-&gt;6)]-beta-D-Man-(1-&gt;4)-beta-D-GlcNAc-(1-&gt;4)-alpha-D-GlcNAc-diphospho-di-trans,poly-cis-dolichol + GDP + H(+). The protein operates within protein modification; protein glycosylation. Its function is as follows. Mannosylates Man(2)GlcNAc(2)-dolichol diphosphate and Man(1)GlcNAc(2)-dolichol diphosphate to form Man(3)GlcNAc(2)-dolichol diphosphate. The polypeptide is Alpha-1,3/1,6-mannosyltransferase ALG2 (ALG2) (Rhizomucor pusillus).